Reading from the N-terminus, the 1205-residue chain is MVLLSLWLIAAALVEVRTSADGQAGNEEMVQIDLPIKRYREYELVTPVSTNLEGRYLSHTLSASHKKRSARDVSSNPEQLFFNITAFGKDFHLRLKPNTQLVAPGAVVEWHETSLVPGNITDPINNHQPGSATYRIRRTEPLQTNCAYVGDIVDIPGTSVAISNCDGLAGMIKSDNEEYFIEPLERGKQMEEEKGRIHVVYKRSAVEQAPIDMSKDFHYRESDLEGLDDLGTVYGNIHQQLNETMRRRRHAGENDYNIEVLLGVDDSVVRFHGKEHVQNYLLTLMNIVNEIYHDESLGVHINVVLVRMIMLGYAKSISLIERGNPSRSLENVCRWASQQQRSDLNHSEHHDHAIFLTRQDFGPAGMQGYAPVTGMCHPVRSCTLNHEDGFSSAFVVAHETGHVLGMEHDGQGNRCGDETAMGSVMAPLVQAAFHRYHWSRCSGQELKRYIHSYDCLLDDPFDHDWPKLPELPGINYSMDEQCRFDFGVGYKMCTAFRTFDPCKQLWCSHPDNPYFCKTKKGPPLDGTECAAGKWCYKGHCMWKNANQQKQDGNWGSWTKFGSCSRTCGTGVRFRTRQCNNPMPINGGQDCPGVNFEYQLCNTEECQKHFEDFRAQQCQQRNSHFEYQNTKHHWLPYEHPDPKKRCHLYCQSKETGDVAYMKQLVHDGTHCSYKDPYSICVRGECVKVGCDKEIGSNKVEDKCGVCGGDNSHCRTVKGTFTRTPRKLGYLKMFDIPPGARHVLIQEDEASPHILAIKNQATGHYILNGKGEEAKSRTFIDLGVEWDYNIEDDIESLHTDGPLHDPVIVLIIPQENDTRSSLTYKYIIHEDSVPTINSNNVIQEELDTFEWALKSWSQCSKPCGGGFQYTKYGCRRKSDNKMVHRSFCEANKKPKPIRRMCNIQECTHPLWVAEEWEHCTKTCGSSGYQLRTVRCLQPLLDGTNRSVHSKYCMGDRPESRRPCNRVPCPAQWKTGPWSECSVTCGEGTEVRQVLCRAGDHCDGEKPESVRACQLPPCNDEPCLGDKSIFCQMEVLARYCSIPGYNKLCCESCSKRSSTLPPPYLLEAAETHDDVISNPSDLPRSLVMPTSLVPYHSETPAKKMSLSSISSVGGPNAYAAFRPNSKPDGANLRQRSAQQAGSKTVRLVTVPSSPPTKRVHLSSASQMAAASFFAASDSIGASSQARTSKKDGKIIDNRRPTRSSTLER.

Positions 1–20 (MVLLSLWLIAAALVEVRTSA) are cleaved as a signal peptide. Positions 21-249 (DGQAGNEEMV…QLNETMRRRR (229 aa)) are excised as a propeptide. N-linked (GlcNAc...) asparagine glycosylation is found at Asn83, Asn119, Asn242, and Asn345. A Peptidase M12B domain is found at 256–460 (YNIEVLLGVD…HSYDCLLDDP (205 aa)). 3 disulfides stabilise this stretch: Cys333/Cys382, Cys376/Cys455, and Cys415/Cys441. His398 provides a ligand contact to Zn(2+). The active site involves Glu399. Positions 402 and 408 each coordinate Zn(2+). Positions 470–550 (ELPGINYSMD…MWKNANQQKQ (81 aa)) constitute a Disintegrin domain. An N-linked (GlcNAc...) asparagine glycan is attached at Asn475. Cystine bridges form between Cys482–Cys507, Cys493–Cys516, Cys502–Cys535, Cys529–Cys540, Cys563–Cys600, Cys567–Cys605, and Cys578–Cys590. Residues 551–606 (DGNWGSWTKFGSCSRTCGTGVRFRTRQCNNPMPINGGQDCPGVNFEYQLCNTEECQ) form the TSP type-1 1 domain. The tract at residues 713-844 (RTVKGTFTRT…NSNNVIQEEL (132 aa)) is spacer. N-linked (GlcNAc...) asparagine glycosylation occurs at Asn814. TSP type-1 domains are found at residues 845–905 (DTFE…QECT), 906–965 (HPLW…NRVP), and 966–1014 (CPAQ…QLPP). Residue Asn942 is glycosylated (N-linked (GlcNAc...) asparagine). Intrachain disulfides connect Cys978-Cys1010, Cys982-Cys1015, and Cys993-Cys999. One can recognise a PLAC domain in the interval 1015–1054 (CNDEPCLGDKSIFCQMEVLARYCSIPGYNKLCCESCSKRS). The disordered stretch occupies residues 1174–1205 (DSIGASSQARTSKKDGKIIDNRRPTRSSTLER). Basic and acidic residues predominate over residues 1185–1205 (SKKDGKIIDNRRPTRSSTLER).

Zn(2+) serves as cofactor. Post-translationally, the precursor is cleaved by a furin endopeptidase. In terms of processing, glycosylated. Can be O-fucosylated by POFUT2 on a serine or a threonine residue found within the consensus sequence C1-X(2)-(S/T)-C2-G of the TSP type-1 repeat domains where C1 and C2 are the first and second cysteine residue of the repeat, respectively. Fucosylated repeats can then be further glycosylated by the addition of a beta-1,3-glucose residue by the glucosyltransferase, B3GALTL. Fucosylation mediates the efficient secretion of ADAMTS family members. Can also be C-glycosylated with one or two mannose molecules on tryptophan residues within the consensus sequence W-X-X-W of the TPRs, and N-glycosylated. These other glycosylations can also facilitate secretion. Found in cartilage and skin.

The protein localises to the secreted. Its subcellular location is the extracellular space. It localises to the extracellular matrix. Functionally, cleaves the propeptides of type II collagen prior to fibril assembly. Does not act on types I and III collagens. This chain is A disintegrin and metalloproteinase with thrombospondin motifs 3 (ADAMTS3), found in Homo sapiens (Human).